Consider the following 248-residue polypeptide: ATP synthase subunit a, chloroplastic (248 aa).

The next 5 membrane-spanning stretches (helical) occupy residues Gln38–Val58, Val96–Leu116, Ile135–Ala155, Leu200–Leu220, and Gly221–Gly241.

This sequence belongs to the ATPase A chain family. F-type ATPases have 2 components, CF(1) - the catalytic core - and CF(0) - the membrane proton channel. CF(1) has five subunits: alpha(3), beta(3), gamma(1), delta(1), epsilon(1). CF(0) has four main subunits: a, b, b' and c.

It is found in the plastid. It localises to the chloroplast thylakoid membrane. Its function is as follows. Key component of the proton channel; it plays a direct role in the translocation of protons across the membrane. This Pinus koraiensis (Korean pine) protein is ATP synthase subunit a, chloroplastic.